Here is a 216-residue protein sequence, read N- to C-terminus: Small ribosomal subunit protein uS3 (216 aa).

Residues 38-106 form the KH type-2 domain; the sequence is IRGYLKKKLY…EIIINILEVR (69 aa).

Belongs to the universal ribosomal protein uS3 family. In terms of assembly, part of the 30S ribosomal subunit. Forms a tight complex with proteins S10 and S14.

Its function is as follows. Binds the lower part of the 30S subunit head. Binds mRNA in the 70S ribosome, positioning it for translation. The chain is Small ribosomal subunit protein uS3 from Syntrophus aciditrophicus (strain SB).